Here is an 876-residue protein sequence, read N- to C-terminus: Serrate RNA effector molecule homolog (876 aa).

Positions 1–90 (MGDSDDEYDR…RRDWDEHSSD (90 aa)) are disordered. The residue at position 2 (G2) is an N-acetylglycine. S4 carries the post-translational modification Phosphoserine. The residue at position 8 (Y8) is a Phosphotyrosine. Basic and acidic residues predominate over residues 8–73 (YDRRRRDKFR…ERFSPPRHEL (66 aa)). S67, S74, and S136 each carry phosphoserine. Residue K150 forms a Glycyl lysine isopeptide (Lys-Gly) (interchain with G-Cter in SUMO2) linkage. The interval 271 to 412 (EEEEEQAGKP…KPKDAAGLEC (142 aa)) is disordered. Basic and acidic residues predominate over residues 297 to 347 (DGERKTNDKDEKKEDGKQAENDSSNDDKTKKSEGDGDKEEKKEDSEKEAKK). Residues 370-387 (SESESESGQAEEEKEEAE) are compositionally biased toward acidic residues. The segment covering 388–412 (EALKEKEKPKEEEWEKPKDAAGLEC) has biased composition (basic and acidic residues). Phosphoserine occurs at positions 493 and 540. A Phosphothreonine modification is found at T544. S570 bears the Phosphoserine mark. The segment at 575-598 (ELLGSSGGAPPEEPPKEGNPAEIN) is disordered. Position 671 is a phosphothreonine (T671). Phosphoserine is present on S679. Residues R833, R840, and R850 each carry the omega-N-methylarginine modification. The segment at 835–854 (NYDAFRGQGGYPGKPRNRMV) is disordered.

This sequence belongs to the ARS2 family. In terms of assembly, interacts with NCBP1 and DROSHA. Interacts with CASP8AP2 and ERBB4. Interacts with LUZP4. Interacts with NCBP2/CBP20 and NCBP3. Interacts with MTREX. As to expression, ubiquitously expressed.

It localises to the nucleus. The protein resides in the nucleoplasm. It is found in the cytoplasm. Acts as a mediator between the cap-binding complex (CBC) and the primary microRNAs (miRNAs) processing machinery during cell proliferation. Contributes to the stability and delivery of capped primary miRNA transcripts to the primary miRNA processing complex containing DGCR8 and DROSHA, thereby playing a role in RNA-mediated gene silencing (RNAi) by miRNAs. Binds capped RNAs (m7GpppG-capped RNA); however interaction is probably mediated via its interaction with NCBP1/CBP80 component of the CBC complex. Involved in cell cycle progression at S phase. Does not directly confer arsenite resistance but rather modulates arsenic sensitivity. Independently of its activity on miRNAs, necessary and sufficient to promote neural stem cell self-renewal. Does so by directly binding SOX2 promoter and positively regulating its transcription. In Homo sapiens (Human), this protein is Serrate RNA effector molecule homolog (SRRT).